Here is a 320-residue protein sequence, read N- to C-terminus: 4-diphosphocytidyl-2-C-methyl-D-erythritol kinase (320 aa).

K20 is an active-site residue. ATP is bound at residue 112-122 (PVAGGMGGGSA). D154 is a catalytic residue.

It belongs to the GHMP kinase family. IspE subfamily.

It carries out the reaction 4-CDP-2-C-methyl-D-erythritol + ATP = 4-CDP-2-C-methyl-D-erythritol 2-phosphate + ADP + H(+). The protein operates within isoprenoid biosynthesis; isopentenyl diphosphate biosynthesis via DXP pathway; isopentenyl diphosphate from 1-deoxy-D-xylulose 5-phosphate: step 3/6. Catalyzes the phosphorylation of the position 2 hydroxy group of 4-diphosphocytidyl-2C-methyl-D-erythritol. The polypeptide is 4-diphosphocytidyl-2-C-methyl-D-erythritol kinase (Arthrobacter sp. (strain FB24)).